We begin with the raw amino-acid sequence, 519 residues long: LysM domain-containing protein ARB_03442 (519 aa).

Residues 1-19 (MGQLKQLAGILALASPAIA) form the signal peptide. N-linked (GlcNAc...) asparagine glycosylation occurs at asparagine 47. The 47-residue stretch at 312–358 (KYYNVVAGDTCASISSEFEVTMDELLTYNPELHPNCENLWANFAICV) folds into the LysM domain. The interval 314 to 358 (YNVVAGDTCASISSEFEVTMDELLTYNPELHPNCENLWANFAICV) is lysM domain. The span at 407–416 (PDAPDAQGQT) shows a compositional bias: low complexity. The disordered stretch occupies residues 407–458 (PDAPDAQGQTVHDDEPPEEPHIEEPPKDIPAGDDDDRKKAKLPLPSGKYPLP). Residues 417–433 (VHDDEPPEEPHIEEPPK) are compositionally biased toward basic and acidic residues. Asparagine 460 carries N-linked (GlcNAc...) asparagine glycosylation. In terms of domain architecture, Chitin-binding type-1 spans 467-510 (DGSCNEYISCVGSPFGVCCSTSGWCGYGKPWCGVGNCVSGYCDT). 4 disulfides stabilise this stretch: cysteine 470/cysteine 485, cysteine 476/cysteine 491, cysteine 484/cysteine 498, and cysteine 503/cysteine 508.

It is found in the secreted. Might have a role in sequestration of chitin oligosaccharides (breakdown products of fungal cell walls that are released during invasion and act as triggers of host immunity) to dampen host defense. In Arthroderma benhamiae (strain ATCC MYA-4681 / CBS 112371) (Trichophyton mentagrophytes), this protein is LysM domain-containing protein ARB_03442.